The sequence spans 3365 residues: Probable serine/threonine-protein kinase roco9 (3365 aa).

Disordered regions lie at residues 1–177 (MTSI…KSSK), 397–497 (ESTE…QPPQ), 944–985 (PIKK…GFLS), 1044–1098 (IHQQ…NNKI), and 1261–1301 (QNNL…ISKG). Positions 8 to 27 (FDKKSKRSNEDTGEKEETKK) are enriched in basic and acidic residues. 4 stretches are compositionally biased toward low complexity: residues 51-84 (LQQL…SLNT), 100-116 (STNS…STRS), 137-169 (SQTS…TVKT), and 397-415 (ESTE…TLEP). One can recognise a Rho-GAP domain in the interval 243–437 (TPLYSLIKRQ…RLPQQSSDDN (195 aa)). The span at 421–434 (PLSTSTQRLPQQSS) shows a compositional bias: polar residues. 5 stretches are compositionally biased toward low complexity: residues 435–445 (DDNSNNDNNNK), 457–489 (NNDN…QPKQ), 959–974 (SSPL…IPSK), 1044–1096 (IHQQ…NNNN), and 1262–1301 (NNLN…ISKG). One can recognise a Myotubularin phosphatase domain in the interval 804 to 1484 (IWDIYSPLIE…DQIILWSSFF (681 aa)). 16 LRR repeats span residues 1510 to 1526 (SQKL…LSYF), 1527 to 1549 (STLT…IILL), 1550 to 1572 (SNLT…LLKL), 1576 to 1599 (KLKL…IYTL), 1600 to 1622 (STLT…ISKM), 1624 to 1645 (QLKC…LSLC), 1646 to 1668 (VGLE…FFKL), 1670 to 1691 (SLRM…KLDD), 1697 to 1720 (MNEI…MFEM), 1722 to 1743 (SLIH…LLDN), 1744 to 1770 (LVNL…LFKL), 1772 to 1789 (VLDL…HAML), 1790 to 1812 (PSLK…DFNL), 1814 to 1835 (LLSE…IGTK), 1837 to 1861 (LSLT…ALLK), and 1863 to 1887 (LKSL…DAIL). Over residues 1932-1947 (SKEREKEKEKEKEKEK) the composition is skewed to basic and acidic residues. Disordered stretches follow at residues 1932–1963 (SKER…DKDK), 2190–2389 (NNNN…NNGS), 2507–2567 (APST…LQTP), and 2674–2704 (SNQQ…TSIN). Composition is skewed to low complexity over residues 2190–2205 (NNNN…NNNN), 2216–2389 (SINN…NNGS), 2522–2567 (NNTS…LQTP), and 2676–2688 (QQQQ…STQH). The region spanning 3008–3269 (ELDPNPIGEG…KKLEEIELIL (262 aa)) is the Protein kinase domain. ATP contacts are provided by residues 3014–3022 (IGEGGTATV) and Lys3035. The Proton acceptor role is filled by Asp3132. Positions 3311–3333 (QQQKQQQLQQQKQSPKQLQQQKP) are enriched in low complexity. The disordered stretch occupies residues 3311 to 3365 (QQQKQQQLQQQKQSPKQLQQQKPLPTPPKQLSNNDSTPTKPLDDSSDSSSEDSNN). Residues 3354–3365 (DSSDSSSEDSNN) are compositionally biased toward acidic residues.

The protein belongs to the protein kinase superfamily. TKL Ser/Thr protein kinase family. ROCO subfamily.

It catalyses the reaction L-seryl-[protein] + ATP = O-phospho-L-seryl-[protein] + ADP + H(+). The enzyme catalyses L-threonyl-[protein] + ATP = O-phospho-L-threonyl-[protein] + ADP + H(+). The sequence is that of Probable serine/threonine-protein kinase roco9 (roco9) from Dictyostelium discoideum (Social amoeba).